The chain runs to 245 residues: tRNA pseudouridine synthase A (245 aa).

Asp-52 functions as the Nucleophile in the catalytic mechanism. Substrate is bound at residue Tyr-111.

Belongs to the tRNA pseudouridine synthase TruA family. Homodimer.

It catalyses the reaction uridine(38/39/40) in tRNA = pseudouridine(38/39/40) in tRNA. In terms of biological role, formation of pseudouridine at positions 38, 39 and 40 in the anticodon stem and loop of transfer RNAs. This Rickettsia prowazekii (strain Madrid E) protein is tRNA pseudouridine synthase A.